Reading from the N-terminus, the 299-residue chain is Oxaloacetate decarboxylase (299 aa).

Ser57 serves as a coordination point for substrate. Asp95 contributes to the Mg(2+) binding site. Positions 167 and 243 each coordinate substrate.

Belongs to the isocitrate lyase/PEP mutase superfamily. Oxaloacetate decarboxylase family. As to quaternary structure, homotetramer; dimer of dimers. It depends on Mg(2+) as a cofactor.

The catalysed reaction is oxaloacetate + H(+) = pyruvate + CO2. Catalyzes the decarboxylation of oxaloacetate into pyruvate. Seems to play a role in maintaining cellular concentrations of bicarbonate and pyruvate. The sequence is that of Oxaloacetate decarboxylase from Paraburkholderia xenovorans (strain LB400).